The sequence spans 240 residues: Bactofilin BacP (240 aa).

An interacts with PadC region spans residues 116-240 (DVEPGRLPAE…KKVVVKKKTR (125 aa)). The segment at 117 to 240 (VEPGRLPAER…KKVVVKKKTR (124 aa)) is disordered. Over residues 126-150 (RPAVVRPTAVTRPTATPARPTIPAA) the composition is skewed to low complexity. The span at 151–173 (RPMPPPPPSRPTPPPPPARPSAP) shows a compositional bias: pro residues. The span at 229–240 (AKKKVVVKKKTR) shows a compositional bias: basic residues.

This sequence belongs to the bactofilin family. Interacts with BacN and probably also BacO, the 3 proteins colocalize as an extended structure. Interacts with PadC.

It localises to the cytoplasm. The protein resides in the cytoskeleton. In terms of biological role, a non-essential component of the chromosome segregation machinery. Positions the ParA-ParB-parS chromosome segregation machinery within the cell; BacP seems to be the most important bactofilin in this process. Forms a heteropolymeric, subpolar scaffold in the cell; BacP probably forms the core, BacO contributes to position and integrity while BacN does not seem to contribute to assembly. This chain is Bactofilin BacP, found in Myxococcus xanthus (strain DK1622).